A 66-amino-acid chain; its full sequence is Surface composition regulator (66 aa).

This sequence belongs to the GlgS family.

Functionally, major determinant of cell surface composition. Negatively regulates motility, adhesion and synthesis of biofilm exopolysaccharides. This is Surface composition regulator from Escherichia coli O139:H28 (strain E24377A / ETEC).